Consider the following 426-residue polypeptide: 3-phosphoshikimate 1-carboxyvinyltransferase (426 aa).

3-phosphoshikimate-binding residues include Lys22, Ser23, and Arg27. Residue Lys22 coordinates phosphoenolpyruvate. The phosphoenolpyruvate site is built by Gly96 and Arg124. 7 residues coordinate 3-phosphoshikimate: Ser170, Ser171, Gln172, Ser198, Asp314, Asn337, and Lys341. A phosphoenolpyruvate-binding site is contributed by Gln172. Asp314 functions as the Proton acceptor in the catalytic mechanism. 3 residues coordinate phosphoenolpyruvate: Arg345, Arg387, and Lys412.

This sequence belongs to the EPSP synthase family. Monomer.

The protein resides in the cytoplasm. The catalysed reaction is 3-phosphoshikimate + phosphoenolpyruvate = 5-O-(1-carboxyvinyl)-3-phosphoshikimate + phosphate. It participates in metabolic intermediate biosynthesis; chorismate biosynthesis; chorismate from D-erythrose 4-phosphate and phosphoenolpyruvate: step 6/7. Catalyzes the transfer of the enolpyruvyl moiety of phosphoenolpyruvate (PEP) to the 5-hydroxyl of shikimate-3-phosphate (S3P) to produce enolpyruvyl shikimate-3-phosphate and inorganic phosphate. This Vibrio cholerae serotype O1 (strain ATCC 39541 / Classical Ogawa 395 / O395) protein is 3-phosphoshikimate 1-carboxyvinyltransferase.